The chain runs to 400 residues: Elongation factor Tu (400 aa).

The tr-type G domain maps to 10–210; the sequence is KPHINVGTIG…ALDEYIPEPK (201 aa). The G1 stretch occupies residues 19–26; that stretch reads GHVDHGKT. A GTP-binding site is contributed by 19 to 26; sequence GHVDHGKT. T26 is a binding site for Mg(2+). The G2 stretch occupies residues 64–68; the sequence is GITIA. The interval 85–88 is G3; it reads DCPG. GTP contacts are provided by residues 85-89 and 140-143; these read DCPGH and NKAD. Positions 140-143 are G4; that stretch reads NKAD. The interval 178 to 180 is G5; the sequence is SAL.

Belongs to the TRAFAC class translation factor GTPase superfamily. Classic translation factor GTPase family. EF-Tu/EF-1A subfamily. Monomer.

The protein localises to the cytoplasm. The catalysed reaction is GTP + H2O = GDP + phosphate + H(+). Functionally, GTP hydrolase that promotes the GTP-dependent binding of aminoacyl-tRNA to the A-site of ribosomes during protein biosynthesis. In Rubrobacter xylanophilus (strain DSM 9941 / JCM 11954 / NBRC 16129 / PRD-1), this protein is Elongation factor Tu.